We begin with the raw amino-acid sequence, 165 residues long: NSGGVLVSVAAFKNHEGYNSKTMVNDIAVIRLSSSLTTSSTIKTIGLATAAPANGAAATVSGWGTTSSGGSIPSQLRYVDVKIVGRTQCASSTYGYGSEIKASMICAYTVGKDSCQGDSGGPLVSGGRLVGVVSWGYGCAAVNYPGVYADVAALRSWVVSAANSV.

One can recognise a Peptidase S1 domain in the interval 1-163 (NSGGVLVSVA…LRSWVVSAAN (163 aa)). Asp-26 (charge relay system) is an active-site residue. 2 cysteine pairs are disulfide-bonded: Cys-89/Cys-106 and Cys-115/Cys-139. The active-site Charge relay system is Ser-119.

Belongs to the peptidase S1 family.

It is found in the secreted. The protein localises to the extracellular space. The enzyme catalyses Preferential cleavage: Arg-|-Xaa, Lys-|-Xaa.. The protein is Trypsin alpha-3 of Lucilia cuprina (Green bottle fly).